A 255-amino-acid chain; its full sequence is Geranylgeranylglyceryl phosphate synthase (255 aa).

Mg(2+)-binding residues include D26 and S55. Sn-glycerol 1-phosphate is bound by residues 174-180 (YLEAGSG), 205-206 (GG), and 227-228 (GT).

Belongs to the GGGP/HepGP synthase family. Group II subfamily. It depends on Mg(2+) as a cofactor.

It is found in the cytoplasm. It catalyses the reaction sn-glycerol 1-phosphate + (2E,6E,10E)-geranylgeranyl diphosphate = sn-3-O-(geranylgeranyl)glycerol 1-phosphate + diphosphate. It participates in membrane lipid metabolism; glycerophospholipid metabolism. Functionally, prenyltransferase that catalyzes the transfer of the geranylgeranyl moiety of geranylgeranyl diphosphate (GGPP) to the C3 hydroxyl of sn-glycerol-1-phosphate (G1P). This reaction is the first ether-bond-formation step in the biosynthesis of archaeal membrane lipids. The protein is Geranylgeranylglyceryl phosphate synthase of Thermococcus sibiricus (strain DSM 12597 / MM 739).